The primary structure comprises 438 residues: GRAS family protein TF80 (438 aa).

The region spanning 13-436 (LRYDSHGSNP…RPLFSVSAWK (424 aa)) is the GRAS domain. Residues 20 to 81 (SNPMIPLIEC…YKIVKHLPGV (62 aa)) form a leucine repeat I (LRI) region. Residues 100-165 (QKYFYDLCPF…GGPPFLKITG (66 aa)) form a VHIID region. Positions 131 to 135 (VHIID) match the VHIID motif. The leucine repeat II (LRII) stretch occupies residues 175–207 (QMSFHLTTEAGILDFPLQFNPIISKLEDVDFEN). Positions 216-359 (VAISSVLQLH…SMLLGEQIKN (144 aa)) are PFYRE. Residues 224 to 228 (LHSLL) carry the LXXLL motif motif. Positions 362–436 (TCEGVDRKER…RPLFSVSAWK (75 aa)) are SAW.

The protein belongs to the GRAS family. Interacts with RAM1.

It localises to the nucleus. This chain is GRAS family protein TF80 (TF80), found in Medicago truncatula (Barrel medic).